Reading from the N-terminus, the 230-residue chain is Prolactin-6A1 (230 aa).

The first 29 residues, 1-29 (MLSLSQPCFSGTLLMLLASNFLLWKNVAP), serve as a signal peptide directing secretion. Asparagine 57 carries N-linked (GlcNAc...) asparagine glycosylation. 2 disulfide bridges follow: cysteine 89–cysteine 205 and cysteine 222–cysteine 230.

This sequence belongs to the somatotropin/prolactin family. Expressed in both placenta and decidual tissues. Detected first in deciduals cells early in gestation and in trophoblasts later in pregnancy.

Its subcellular location is the secreted. This Mus musculus (Mouse) protein is Prolactin-6A1 (Prl6a1).